We begin with the raw amino-acid sequence, 302 residues long: UPF0725 protein At1g23960 (302 aa).

Alanine 2 bears the N-acetylalanine mark.

Belongs to the UPF0725 (EMB2204) family.

The protein is UPF0725 protein At1g23960 of Arabidopsis thaliana (Mouse-ear cress).